The chain runs to 480 residues: Glutamate--tRNA ligase (480 aa).

The 'HIGH' region signature appears at 8–18 (PSPTGPLHIGG). Positions 249 to 253 (KMSKR) match the 'KMSKS' region motif. An ATP-binding site is contributed by K252.

This sequence belongs to the class-I aminoacyl-tRNA synthetase family. Glutamate--tRNA ligase type 1 subfamily. In terms of assembly, monomer.

Its subcellular location is the cytoplasm. It catalyses the reaction tRNA(Glu) + L-glutamate + ATP = L-glutamyl-tRNA(Glu) + AMP + diphosphate. Catalyzes the attachment of glutamate to tRNA(Glu) in a two-step reaction: glutamate is first activated by ATP to form Glu-AMP and then transferred to the acceptor end of tRNA(Glu). The sequence is that of Glutamate--tRNA ligase from Carboxydothermus hydrogenoformans (strain ATCC BAA-161 / DSM 6008 / Z-2901).